The following is a 224-amino-acid chain: 7-cyano-7-deazaguanine synthase (224 aa).

Residue 10–20 (LSGGLDSATVV) coordinates ATP. Residues Cys189, Cys199, Cys202, and Cys205 each contribute to the Zn(2+) site.

The protein belongs to the QueC family. Requires Zn(2+) as cofactor.

The catalysed reaction is 7-carboxy-7-deazaguanine + NH4(+) + ATP = 7-cyano-7-deazaguanine + ADP + phosphate + H2O + H(+). The protein operates within purine metabolism; 7-cyano-7-deazaguanine biosynthesis. Functionally, catalyzes the ATP-dependent conversion of 7-carboxy-7-deazaguanine (CDG) to 7-cyano-7-deazaguanine (preQ(0)). This is 7-cyano-7-deazaguanine synthase from Pseudomonas putida (strain ATCC 47054 / DSM 6125 / CFBP 8728 / NCIMB 11950 / KT2440).